A 114-amino-acid chain; its full sequence is Large ribosomal subunit protein uL22 (114 aa).

The protein belongs to the universal ribosomal protein uL22 family. Part of the 50S ribosomal subunit.

Functionally, this protein binds specifically to 23S rRNA; its binding is stimulated by other ribosomal proteins, e.g. L4, L17, and L20. It is important during the early stages of 50S assembly. It makes multiple contacts with different domains of the 23S rRNA in the assembled 50S subunit and ribosome. Its function is as follows. The globular domain of the protein is located near the polypeptide exit tunnel on the outside of the subunit, while an extended beta-hairpin is found that lines the wall of the exit tunnel in the center of the 70S ribosome. In Streptococcus suis (strain 98HAH33), this protein is Large ribosomal subunit protein uL22.